Reading from the N-terminus, the 516-residue chain is Cytochrome P450 monooxygenase ntnM (516 aa).

The helical transmembrane segment at 22 to 42 (IINVILSIAAIALIRALAISI) threads the bilayer. Cys-453 contacts heme.

Belongs to the cytochrome P450 family. It depends on heme as a cofactor.

The protein resides in the membrane. It functions in the pathway secondary metabolite biosynthesis; terpenoid biosynthesis. Functionally, cytochrome P450 monooxygenase; part of the gene cluster that mediates the biosynthesis of the meroterpenoids nectripenoids A and B, as well as cochliquninone D and isocochliquninone E. The pathway probably begins with the HR-PKS ntnH that catalyzes two chain-extension steps to form a reduced triketide, which then primes the SAT domain in the NR-PKS ntnG to initiate three more cycles of extension to give a linear hexaketide corresponding to the polyketide part of nectripenoids. The FAD-dependent monooxygenase ntnJ then performs an oxidative decarboxylation at C11 of the ntnH/ntnG product, via an electrophilic aromatic hydroxylation with concomitant ipso-decarboxylation. The membrane-bound polyprenyl transferase ntnF then introduces a farnesyl group before the FAD-dependent monooxygenase ntnK functions as the first epoxidase on terminal C12'-C13' olefin, followed by a second epoxidation on C7'-C8' catalyzed by ntnA. The terpene cyclase/mutase ntnI then initiates the sequential tricyclic ring formation through protonation of the terminal epoxide and catalyzes the regioselective and stereoselective 6/6/6-tricyclic ring formation. The cytochrome P450 monooxygenase ntnM may then hydroxylate C1'. The chain is Cytochrome P450 monooxygenase ntnM from Nectria sp.